The sequence spans 31 residues: M-poneritoxin-Nc3b (31 aa).

This sequence belongs to the ponericin-G family. Expressed by the venom gland.

It localises to the secreted. The protein resides in the target cell membrane. Functionally, membrane-perturbating peptide with a few moderate activities. It is insecticidal, since it induces reversible paralysis in insects (L.cuprina) after 1 hour, but fails to kill them. It is also antiparasitic, since it moderately inhibits the larval development of the major pathogenic nematode of ruminants (H.contortus, IC(50)=23.2 uM) and reduces the motility of adult males of the other nematode B.malayi. It does not show antibacterial activity (MIC&gt;40 uM). It is not cytotoxic to HEK293 cells and does not induce hemolysis in human erythrocytes. It does not cause an increase in intracellular calcium concentration on neuronal and epithelial cell lines. The chain is M-poneritoxin-Nc3b from Neoponera commutata (Large hunting ant).